The chain runs to 501 residues: MVIALSDSFIENPRSFLQRFQDALFAGSKPDLQGTLGIDEEVSNIFATEERIRKIPNYLDCKWSELKTGQLLRLQGMVQDTNFGHEFFAGAVEVNENIWRGCRYILDFSEDEMHLDESKIVLDERYSLFLTNVPGERTLPVIEALGNWGSESLKERSLKYSNRLQASNDTGVCVKCYGGMETKVQVCQAIDVIGIYEEPSEYSDGLPILHMLCFKDYTQSATQAPSPQQAEIIRPKILKYFEKVLGENIAAESLMLALLSNVVHKTTGLVIGGFTLNLTNCTSELVSQLVSVLRPLIKRMVIQKVNVAELNRKPLYPLSDGETLDTSHLQVAPGTLIVLDETELSSGTLNDVGCRNVQFLSSLISQQDLTFFYPFSSFTVHSNVRIIILSHGRSILPADVGCRCRGDSPDTIEFPTDSDELQEFCNFFHMWNMRANIPENMLDYIQSTYVSSRQYNKEINEKTLSLQINCSRLYAKSFGRQLVSRIDFEAARSLINHWTVN.

It belongs to the UPF0616 family.

The protein resides in the cytoplasm. Its subcellular location is the nucleus. This chain is UPF0616 protein C1687.04, found in Schizosaccharomyces pombe (strain 972 / ATCC 24843) (Fission yeast).